The sequence spans 413 residues: Putative competence-damage inducible protein (413 aa).

The protein belongs to the CinA family.

The chain is Putative competence-damage inducible protein from Acetivibrio thermocellus (strain ATCC 27405 / DSM 1237 / JCM 9322 / NBRC 103400 / NCIMB 10682 / NRRL B-4536 / VPI 7372) (Clostridium thermocellum).